Consider the following 503-residue polypeptide: Putative ribose/galactose/methyl galactoside import ATP-binding protein (503 aa).

ABC transporter domains lie at 7–244 and 254–498; these read LEMI…VGRE and VPIG…TGQL. 39–46 is a binding site for ATP; it reads GENGAGKS.

It belongs to the ABC transporter superfamily. Carbohydrate importer 2 (CUT2) (TC 3.A.1.2) family.

The protein resides in the cell membrane. The catalysed reaction is D-ribose(out) + ATP + H2O = D-ribose(in) + ADP + phosphate + H(+). It catalyses the reaction D-galactose(out) + ATP + H2O = D-galactose(in) + ADP + phosphate + H(+). Its function is as follows. Part of an ABC transporter complex involved in carbohydrate import. Could be involved in ribose, galactose and/or methyl galactoside import. Responsible for energy coupling to the transport system. In Geobacillus kaustophilus (strain HTA426), this protein is Putative ribose/galactose/methyl galactoside import ATP-binding protein.